Consider the following 338-residue polypeptide: Heat-inducible transcription repressor HrcA (338 aa).

It belongs to the HrcA family.

Negative regulator of class I heat shock genes (grpE-dnaK-dnaJ and groELS operons). Prevents heat-shock induction of these operons. The sequence is that of Heat-inducible transcription repressor HrcA from Nitrosomonas europaea (strain ATCC 19718 / CIP 103999 / KCTC 2705 / NBRC 14298).